A 513-amino-acid chain; its full sequence is ATP synthase subunit alpha (513 aa).

171–178 (GDRQIGKT) contributes to the ATP binding site.

It belongs to the ATPase alpha/beta chains family. F-type ATPases have 2 components, CF(1) - the catalytic core - and CF(0) - the membrane proton channel. CF(1) has five subunits: alpha(3), beta(3), gamma(1), delta(1), epsilon(1). CF(0) has three main subunits: a(1), b(2) and c(9-12). The alpha and beta chains form an alternating ring which encloses part of the gamma chain. CF(1) is attached to CF(0) by a central stalk formed by the gamma and epsilon chains, while a peripheral stalk is formed by the delta and b chains.

The protein resides in the cell membrane. It catalyses the reaction ATP + H2O + 4 H(+)(in) = ADP + phosphate + 5 H(+)(out). Functionally, produces ATP from ADP in the presence of a proton gradient across the membrane. The alpha chain is a regulatory subunit. This is ATP synthase subunit alpha from Wolbachia pipientis subsp. Culex pipiens (strain wPip).